Reading from the N-terminus, the 475-residue chain is MKILFVSYEVYPLAKVGGLADVAGSLPKYLEKEGVSVQIAMPFHKKVKADNIENTGIVITTKHLPEKYSFEIYKTPLPGSGVPVFLFKNDQLIDSDEVYEGTDLALQAIAFSDAVVKFAETLEPDLLHVNDWQPALIPAYISAFYNGKPKTLLTIHNLGYQGEFDKSYFYKTGLPEKLWQEGKAVKNGAFNFLKTGIVTATAISTVSPTYAKEIQTPEYGAGLDETLRALSDRLFGILNGIDYSEYNPATDKRIPVNFDINSLEKKKENKIALQKELGLPVIDVPVIGLISRLVEQKGFDLIEAAAEKILSNDLQFVVLGTGEERYERLFKSLGERFPEKVSANITFNVDLAQKIYAGSDMFLMPSRYEPCGLGQMFAMRYGTIPVVRFTGGLRDTVKEFNPETLEGNGFGFEEYNPDKLLEAVEKAIKIYENKTLWNQLMLNAMNTDCSWDKSAREYIKLYKHVLNSGRDILNA.

Lys15 provides a ligand contact to ADP-alpha-D-glucose.

This sequence belongs to the glycosyltransferase 1 family. Bacterial/plant glycogen synthase subfamily.

It carries out the reaction [(1-&gt;4)-alpha-D-glucosyl](n) + ADP-alpha-D-glucose = [(1-&gt;4)-alpha-D-glucosyl](n+1) + ADP + H(+). Its pathway is glycan biosynthesis; glycogen biosynthesis. Its function is as follows. Synthesizes alpha-1,4-glucan chains using ADP-glucose. This is Glycogen synthase from Kosmotoga olearia (strain ATCC BAA-1733 / DSM 21960 / TBF 19.5.1).